A 29-amino-acid polypeptide reads, in one-letter code: Cuticle protein 36 (29 aa).

In terms of biological role, component of the cuticle of migratory locust which contains more than 100 different structural proteins. The sequence is that of Cuticle protein 36 from Locusta migratoria (Migratory locust).